A 166-amino-acid polypeptide reads, in one-letter code: MEASGEKAAVVRRLMEAKEVSGKTFSGIAAETGLTNVYVAQLLRRQAQLKADTVPALRAALPTLTDDLIELMMQPPFRSYHPNIVHEPAIYRLNEAVMHFGESIKEIINEEFGDGIMSAIDFYCSVDKVEGADGKDRVVVTFDGKYLPYTEQKSEHMMSRPTRKTS.

Catalysis depends on residues arginine 92, glutamate 95, and serine 118.

Belongs to the cyanase family.

It carries out the reaction cyanate + hydrogencarbonate + 3 H(+) = NH4(+) + 2 CO2. Catalyzes the reaction of cyanate with bicarbonate to produce ammonia and carbon dioxide. In Zea mays (Maize), this protein is Cyanate hydratase.